A 546-amino-acid chain; its full sequence is Plastidic glucose transporter 4 (546 aa).

The next 12 membrane-spanning stretches (helical) occupy residues 105-125, 148-168, 182-202, 205-225, 240-260, 265-285, 345-365, 381-401, 410-430, 441-461, 477-497, and 503-523; these read VLPF…HLGV, WIVS…GALA, IPLA…TMIV, LLAG…ISEI, LFIC…AANP, TMFG…AFSP, VVSV…NAVV, VAAS…ASSL, LLLT…LSFT, LAVV…GPVP, AVAL…LYFL, and FGIS…VLYI.

This sequence belongs to the major facilitator superfamily. Sugar transporter (TC 2.A.1.1) family.

It localises to the plastid. The protein localises to the chloroplast inner membrane. Functionally, may be involved in the efflux of glucose towards the cytosol. This chain is Plastidic glucose transporter 4, found in Arabidopsis thaliana (Mouse-ear cress).